The following is an 82-amino-acid chain: Exodeoxyribonuclease 7 small subunit (82 aa).

The protein belongs to the XseB family. Heterooligomer composed of large and small subunits.

The protein resides in the cytoplasm. The enzyme catalyses Exonucleolytic cleavage in either 5'- to 3'- or 3'- to 5'-direction to yield nucleoside 5'-phosphates.. In terms of biological role, bidirectionally degrades single-stranded DNA into large acid-insoluble oligonucleotides, which are then degraded further into small acid-soluble oligonucleotides. The polypeptide is Exodeoxyribonuclease 7 small subunit (Mycobacterium marinum (strain ATCC BAA-535 / M)).